Reading from the N-terminus, the 417-residue chain is Phosphoglycerate kinase 1 (417 aa).

Serine 2 bears the N-acetylserine mark. Phosphoserine occurs at positions 2 and 4. Position 6 is an N6-succinyllysine (lysine 6). Residue lysine 11 is modified to N6-acetyllysine. Positions 23, 24, 25, 26, 38, and 39 each coordinate (2R)-3-phosphoglycerate. Residues 38 to 43 (QRIKAA) are mitochondrial targeting region exposed following cis-trans isomerization by PIN1 and recognized by the TOM complex for mitochondrial translocation of the protein. Lysine 48 carries the N6-acetyllysine; alternate modification. Lysine 48 carries the N6-succinyllysine; alternate modification. Residues serine 62, histidine 63, glycine 65, and arginine 66 each coordinate (2R)-3-phosphoglycerate. Lysine 75 is subject to N6-acetyllysine. A Phosphotyrosine modification is found at tyrosine 76. 2 positions are modified to N6-acetyllysine: lysine 86 and lysine 91. Lysine 97 carries the post-translational modification N6-acetyllysine; alternate. The residue at position 97 (lysine 97) is an N6-(2-hydroxyisobutyryl)lysine; alternate. (2R)-3-phosphoglycerate-binding residues include leucine 122 and arginine 123. An N6-acetyllysine; alternate modification is found at lysine 131. Lysine 131 bears the N6-malonyllysine; alternate mark. Lysine 146 is subject to N6-acetyllysine. Residues histidine 170 and arginine 171 each contribute to the (2R)-3-phosphoglycerate site. N6-succinyllysine is present on lysine 191. Tyrosine 196 bears the Phosphotyrosine mark. An N6-acetyllysine modification is found at lysine 199. Serine 203 is modified (phosphoserine; by MAPK1). ADP is bound at residue glycine 214. Glycine 214 provides a ligand contact to CDP. Residues alanine 215 and lysine 216 each contribute to the AMP site. Alanine 215 contributes to the ATP binding site. A Mg(2+)-binding site is contributed by alanine 215. At lysine 216 the chain carries N6-(2-hydroxyisobutyryl)lysine. Residues alanine 218 and aspartate 219 each contribute to the Mg(2+) site. Aspartate 219 is a binding site for CDP. Lysine 220 provides a ligand contact to AMP. An ATP-binding site is contributed by lysine 220. At lysine 220 the chain carries N6-(2-hydroxyisobutyryl)lysine. Glycine 238 serves as a coordination point for ADP. Glycine 238 is a CDP binding site. Glycine 239 provides a ligand contact to AMP. Glycine 239 contacts ATP. N6-acetyllysine is present on residues lysine 267 and lysine 291. Glycine 313 contacts AMP. Position 313 (glycine 313) interacts with ATP. At lysine 323 the chain carries N6-(2-hydroxyisobutyryl)lysine. 3 residues coordinate CDP: glycine 338, valine 340, and phenylalanine 343. Phenylalanine 343 is an ADP binding site. Glutamate 344 serves as a coordination point for AMP. Glutamate 344 is a binding site for ATP. Lysine 361 carries the post-translational modification N6-acetyllysine. 2 residues coordinate ATP: aspartate 375 and threonine 376. Aspartate 375 lines the Mg(2+) pocket.

This sequence belongs to the phosphoglycerate kinase family. As to quaternary structure, monomer. Interacts with kinase MAPK1/ERK2; the interaction is direct, occurs under hypoxic conditions, and promotes its interaction with PIN1. Interacts with peptidyl-prolyl cis-trans isomerase PIN1; the interaction is direct, occurs under hypoxic conditions, and targets the protein to the mitochondrion by promoting interactions with the TOM complex. Interacts with mitochondrial circRNA mcPGK1 (via its 2nd stem-loop); the interaction is direct and targets the protein to the mitochondrion by promoting interactions with the TOM complex. Interacts with pyruvate dehydrogenase kinase PDK1; the interaction is direct, occurs under hypoxic conditions and leads to PDK1-mediated inhibition of pyruvate dehydrogenase complex activity. It depends on Mg(2+) as a cofactor. In terms of processing, phosphorylated at Ser-203 by MAPK1/ERK2 under hypoxic conditions, which promotes its mitochondrial targeting. In terms of tissue distribution, mainly expressed in spermatogonia. Localized on the principle piece in the sperm (at protein level). Expression significantly decreased in the testis of elderly men.

The protein resides in the cytoplasm. Its subcellular location is the cytosol. The protein localises to the mitochondrion matrix. The enzyme catalyses (2R)-3-phosphoglycerate + ATP = (2R)-3-phospho-glyceroyl phosphate + ADP. The catalysed reaction is L-seryl-[protein] + ATP = O-phospho-L-seryl-[protein] + ADP + H(+). It functions in the pathway carbohydrate degradation; glycolysis; pyruvate from D-glyceraldehyde 3-phosphate: step 2/5. Its activity is regulated as follows. Specifically inhibited by heterocyclic compound CBR-470-0. Catalyzes one of the two ATP producing reactions in the glycolytic pathway via the reversible conversion of 1,3-diphosphoglycerate to 3-phosphoglycerate. Both L- and D- forms of purine and pyrimidine nucleotides can be used as substrates, but the activity is much lower on pyrimidines. In addition to its role as a glycolytic enzyme, it seems that PGK1 acts as a polymerase alpha cofactor protein (primer recognition protein). Acts as a protein kinase when localized to the mitochondrion where it phosphorylates pyruvate dehydrogenase kinase PDK1 to inhibit pyruvate dehydrogenase complex activity and suppress the formation of acetyl-coenzyme A from pyruvate, and consequently inhibit oxidative phosphorylation and promote glycolysis. May play a role in sperm motility. This chain is Phosphoglycerate kinase 1 (PGK1), found in Homo sapiens (Human).